Reading from the N-terminus, the 4080-residue chain is Hybrid PKS-NRPS synthetase poxE (4080 aa).

The 435-residue stretch at 8-442 (REPIAIVGSG…GTNAHAIIEA (435 aa)) folds into the Ketosynthase family 3 (KS3) domain. Active-site for beta-ketoacyl synthase activity residues include cysteine 181, histidine 320, and histidine 362. A malonyl-CoA:ACP transacylase (MAT) domain region spans residues 554-878 (VFTGQGAQWA…QRGMNDVEAM (325 aa)). The N-terminal hotdog fold stretch occupies residues 944 to 1078 (HPILGTRCPD…GRLVITYGPV (135 aa)). The 303-residue stretch at 944-1246 (HPILGTRCPD…AVPLEATNAD (303 aa)) folds into the PKS/mFAS DH domain. Residues 945–1243 (PILGTRCPDG…GIHAVPLEAT (299 aa)) are dehydratase (DH) domain. Histidine 976 acts as the Proton acceptor; for dehydratase activity in catalysis. The interval 1093–1246 (MVDVPSERFY…AVPLEATNAD (154 aa)) is C-terminal hotdog fold. The active-site Proton donor; for dehydratase activity is aspartate 1152. The methyltransferase (MT) domain stretch occupies residues 1400-1585 (HFSDYLASVV…GVDTFTSDAD (186 aa)). The segment at 2118 to 2292 (TYWLVGLTGS…AGSVMNIGAI (175 aa)) is ketoreductase (KR)domain. The peptidyl carrier protein stretch occupies residues 2399–2478 (TTDEIYEVIK…TIGEIIKFVL (80 aa)). The Carrier 1 domain maps to 2405 to 2481 (EVIKECFIVK…EIIKFVLEKL (77 aa)). O-(pantetheine 4'-phosphoryl)serine is present on serine 2441. The tract at residues 2488–2569 (SLGLSPPTGA…AASPSIHTEE (82 aa)) is disordered. Residues 2511–2525 (VVVERRNVPRLEKKI) show a composition bias toward basic and acidic residues. Residues 2528 to 2545 (SAGSRTSSSVTGTSKSVS) show a composition bias toward low complexity. A compositionally biased stretch (polar residues) spans 2551–2565 (DTASSQTSEAASPSI). A condensation region spans residues 2607–3036 (KEPLSFGQSR…DSKQPGGHVS (430 aa)). The interval 3069–3478 (DMAKQYPQKL…DGRLRIEGRI (410 aa)) is adenylation. The 81-residue stretch at 3593-3673 (AHLNEAQAQM…KMALLIKPQE (81 aa)) folds into the Carrier 2 domain. Positions 3598-3670 (AQAQMVQLWE…TLEKMALLIK (73 aa)) are thiolation. Serine 3633 carries the post-translational modification O-(pantetheine 4'-phosphoryl)serine. The reductase (RED) domain stretch occupies residues 3740-3959 (LTGATGFIGQ…DFVPVEQVVR (220 aa)).

In the C-terminal section; belongs to the NRP synthetase family.

It functions in the pathway secondary metabolite biosynthesis. In terms of biological role, hybrid PKS-NRPS synthetase; part of the gene cluster that mediates the biosynthesis of oxaleimides, cytotoxic compounds containing an unusual disubstituted succinimide moiety. The first step of the pathway is provided by the HR-PKS poxF that serves in a new mode of collaborative biosynthesis with the PKS-NRPS poxE, by providing the olefin containing amino acid substrate via the synthesis of an ACP-bound dec-4-enoate. The cytochrome P450 monooxygenase poxM-catalyzed oxidation at the alpha-position creates the enzyme-bound 2-hydroxydec-4-enoyl-ACP thioester, which may be prone to spontaneous hydrolysis to yield 2-hydroxydec-4-enoic acid due to increased electrophilicity of the carbonyl. 2-hydroxydec-4-enoic acid can then be further oxidized by poxM to yield the alpha-ketoacid 2-oxodec-4-enoicacid, which is reductively aminated by the aminotransferase poxL to yield (S,E)-2-aminodec-4-enoic acid. The Hybrid PKS-NRPS synthetase poxE then performs condensation between the octaketide product of its PKS modules and the amino group of (S,E)-2-aminodec-4-enoic acid which is activated and incorporated by the adenylation domain. The resulting aminoacyl product can be cyclized by the Diels-Alderase PoxQ and reductively released by the reductive (R) domain of poxE to yield an aldehyde intermediate. The released aldehyde is then substrate for a Knoevenagel condensation by the hydrolyase poxO followed by an oxidation at the 5-position of the pyrrolidone ring. The presence of the olefin from the amino acid building block allows for migration of the substituted allyl group to occur. This allylic transposition reaction takes place in a conjugate addition, semipinacol-like fashion to yield a succinimide intermediate. Iterative two-electron oxidations of the C7 methyl of the succinimide intermediate to the carboxylic acid can be catalyzed by one of two remaining cytochrome P450 monooxygenasess poxC or poxD to yield oxaleimide A. Subsequent oxidation yields the maleimide scaffold oxaleimide I. Both oxaleimide A and oxaleimide I can undergo oxidative modifications in the decalin ring to yield the series of products oxaleimides B to H. This is Hybrid PKS-NRPS synthetase poxE from Penicillium oxalicum (strain 114-2 / CGMCC 5302) (Penicillium decumbens).